A 431-amino-acid chain; its full sequence is MLKDAYTADVTPERDGEEVRLAGWVHEVRDLGGIKFVLLRDRTGIVQLTLPKQKVPKETFEKVPKLTKESVIRVEGTVQANEKAPGGVEVIPQRIEVLSESDTHLPLDPTGKVDADLDTRLDARVLDLRREEPQAIFKIRNVVTTAIREFLEERGFIEVHTPKIIASATEGGTELFPVVYFERDAYLAQSPQLYKQMLMAAGFERVYEIGPIFRAEEHNTRRHLNEAISVDIEMSFIESEEDVMRVLEELLAHVFRKVREECEKELEALDRELPELETPFERITYEETLDLLSEHGIEVEWGEDLPTEAERKLGEIFEEPFFITEWPRETRPFYTMAKDDEVTTAFDLMYQGLELASGAQREHRYDVLVRQIEEQGLSPEDFRHYLEAFKYGMPPHGGWGLGLERTLMTITGAENIREVTLFPRDRKRLHP.

Glu-170 serves as a coordination point for L-aspartate. The interval 192-195 (QLYK) is aspartate. Residue Arg-214 participates in L-aspartate binding. Residues 214 to 216 (RAE), 222 to 224 (RHL), and Glu-354 each bind ATP. Mg(2+) is bound by residues Glu-354 and Ser-357. L-aspartate contacts are provided by Ser-357 and Arg-361. An ATP-binding site is contributed by 402–405 (GLER).

Belongs to the class-II aminoacyl-tRNA synthetase family. Type 2 subfamily. In terms of assembly, homodimer. Requires Mg(2+) as cofactor.

It localises to the cytoplasm. The catalysed reaction is tRNA(Asx) + L-aspartate + ATP = L-aspartyl-tRNA(Asx) + AMP + diphosphate. In terms of biological role, aspartyl-tRNA synthetase with relaxed tRNA specificity since it is able to aspartylate not only its cognate tRNA(Asp) but also tRNA(Asn). Reaction proceeds in two steps: L-aspartate is first activated by ATP to form Asp-AMP and then transferred to the acceptor end of tRNA(Asp/Asn). The chain is Aspartate--tRNA(Asp/Asn) ligase from Methanopyrus kandleri (strain AV19 / DSM 6324 / JCM 9639 / NBRC 100938).